The sequence spans 186 residues: ATP synthase subunit delta (186 aa).

It belongs to the ATPase delta chain family. F-type ATPases have 2 components, F(1) - the catalytic core - and F(0) - the membrane proton channel. F(1) has five subunits: alpha(3), beta(3), gamma(1), delta(1), epsilon(1). CF(0) has four main subunits: a(1), b(1), b'(1) and c(10-14). The alpha and beta chains form an alternating ring which encloses part of the gamma chain. F(1) is attached to F(0) by a central stalk formed by the gamma and epsilon chains, while a peripheral stalk is formed by the delta, b and b' chains.

The protein localises to the cell inner membrane. Functionally, f(1)F(0) ATP synthase produces ATP from ADP in the presence of a proton or sodium gradient. F-type ATPases consist of two structural domains, F(1) containing the extramembraneous catalytic core and F(0) containing the membrane proton channel, linked together by a central stalk and a peripheral stalk. During catalysis, ATP synthesis in the catalytic domain of F(1) is coupled via a rotary mechanism of the central stalk subunits to proton translocation. In terms of biological role, this protein is part of the stalk that links CF(0) to CF(1). It either transmits conformational changes from CF(0) to CF(1) or is implicated in proton conduction. The polypeptide is ATP synthase subunit delta (Cereibacter sphaeroides (strain ATCC 17025 / ATH 2.4.3) (Rhodobacter sphaeroides)).